Reading from the N-terminus, the 208-residue chain is Uracil phosphoribosyltransferase (208 aa).

5-phospho-alpha-D-ribose 1-diphosphate-binding positions include Arg-78, Arg-103, and 130–138 (DPMLATGGT). Uracil contacts are provided by residues Ile-193 and 198–200 (GDA). Asp-199 is a binding site for 5-phospho-alpha-D-ribose 1-diphosphate.

The protein belongs to the UPRTase family. The cofactor is Mg(2+).

It carries out the reaction UMP + diphosphate = 5-phospho-alpha-D-ribose 1-diphosphate + uracil. It participates in pyrimidine metabolism; UMP biosynthesis via salvage pathway; UMP from uracil: step 1/1. With respect to regulation, allosterically activated by GTP. Catalyzes the conversion of uracil and 5-phospho-alpha-D-ribose 1-diphosphate (PRPP) to UMP and diphosphate. This Nitratidesulfovibrio vulgaris (strain DSM 19637 / Miyazaki F) (Desulfovibrio vulgaris) protein is Uracil phosphoribosyltransferase.